A 134-amino-acid polypeptide reads, in one-letter code: Small ribosomal subunit protein uS8c (134 aa).

This sequence belongs to the universal ribosomal protein uS8 family. As to quaternary structure, part of the 30S ribosomal subunit.

It localises to the plastid. The protein resides in the chloroplast. In terms of biological role, one of the primary rRNA binding proteins, it binds directly to 16S rRNA central domain where it helps coordinate assembly of the platform of the 30S subunit. In Phaseolus vulgaris (Kidney bean), this protein is Small ribosomal subunit protein uS8c (rps8).